The following is a 21-amino-acid chain: Bradykinin-potentiating peptide K12 (21 aa).

The tract at residues 1-21 (LRDYANRVINGGPVEAAGPPA) is disordered.

In terms of tissue distribution, expressed by the venom gland.

The protein localises to the secreted. In terms of biological role, inhibits angiotensin-converting enzyme (ACE), but does not serve as substrate for the enzyme. Potentiate bradykinin (BK) on the isolated guinea pig ileum as well as the isolated rat uterus for contraction. Also potentiates in vivo the depressor effect of BK on arterial blood pressure in the normotensive anesthetized rat. Intracerebroventricular injection into mice does not show toxic activity. The sequence is that of Bradykinin-potentiating peptide K12 from Buthus occitanus (Common European scorpion).